The primary structure comprises 319 residues: tRNA uridine(34) hydroxylase (319 aa).

The Rhodanese domain maps to 124–218; sequence LDEDTVILDA…YGKNEETKGE (95 aa). The Cysteine persulfide intermediate role is filled by cysteine 178.

The protein belongs to the TrhO family.

The enzyme catalyses uridine(34) in tRNA + AH2 + O2 = 5-hydroxyuridine(34) in tRNA + A + H2O. Catalyzes oxygen-dependent 5-hydroxyuridine (ho5U) modification at position 34 in tRNAs. The chain is tRNA uridine(34) hydroxylase from Listeria monocytogenes serotype 4b (strain CLIP80459).